The following is a 300-amino-acid chain: Protoheme IX farnesyltransferase (300 aa).

A run of 8 helical transmembrane segments spans residues valine 24–valine 44, tryptophan 46–isoleucine 66, proline 94–phenylalanine 114, leucine 118–leucine 138, isoleucine 146–glycine 166, alanine 172–leucine 192, valine 224–leucine 244, and isoleucine 278–leucine 298.

It belongs to the UbiA prenyltransferase family. Protoheme IX farnesyltransferase subfamily.

It is found in the cell inner membrane. It catalyses the reaction heme b + (2E,6E)-farnesyl diphosphate + H2O = Fe(II)-heme o + diphosphate. The protein operates within porphyrin-containing compound metabolism; heme O biosynthesis; heme O from protoheme: step 1/1. Its function is as follows. Converts heme B (protoheme IX) to heme O by substitution of the vinyl group on carbon 2 of heme B porphyrin ring with a hydroxyethyl farnesyl side group. This is Protoheme IX farnesyltransferase from Burkholderia ambifaria (strain ATCC BAA-244 / DSM 16087 / CCUG 44356 / LMG 19182 / AMMD) (Burkholderia cepacia (strain AMMD)).